A 365-amino-acid polypeptide reads, in one-letter code: 2-aminoethylphosphonate--pyruvate transaminase (365 aa).

Lys194 bears the N6-(pyridoxal phosphate)lysine mark.

It belongs to the class-V pyridoxal-phosphate-dependent aminotransferase family. PhnW subfamily. As to quaternary structure, homodimer. The cofactor is pyridoxal 5'-phosphate.

It carries out the reaction (2-aminoethyl)phosphonate + pyruvate = phosphonoacetaldehyde + L-alanine. Functionally, involved in phosphonate degradation. This chain is 2-aminoethylphosphonate--pyruvate transaminase, found in Bacillus cereus (strain G9842).